The following is a 242-amino-acid chain: ATP synthase subunit a, organellar chromatophore (242 aa).

5 helical membrane passes run 28–48, 89–109, 128–148, 193–213, and 214–234; these read LHGQVFISSWVVISALLVLVI, LPFIGTLFLFIFGCNWGGALV, INTTVAMALLVSLSYFYAGLS, LVVGVLAFLVPILVPLPAMFL, and GLFTSAIQALIFATLAANYIG.

Belongs to the ATPase A chain family. As to quaternary structure, F-type ATPases have 2 components, CF(1) - the catalytic core - and CF(0) - the membrane proton channel. CF(1) has five subunits: alpha(3), beta(3), gamma(1), delta(1), epsilon(1). CF(0) has four main subunits: a, b, b' and c.

The protein resides in the plastid. Its subcellular location is the organellar chromatophore thylakoid membrane. Functionally, key component of the proton channel; it plays a direct role in the translocation of protons across the membrane. The chain is ATP synthase subunit a, organellar chromatophore from Paulinella chromatophora.